Consider the following 276-residue polypeptide: MAPMADSSVDDLKNDVKRLEQRIAELESRLAGHGGVAAATESVRMILMGPPGAGKGTQAPRIKEKFCACHLATGDMLRAQVAAKTPLGREAKKIMDAGGLVSDEIMVNMIKTELENNQECARGFILDGFPRTVTQAEKLDGMLAATKKPLQHAVELQIDDGLLVSRITGRLVHPASGRSYHKIFNPPKAPMTDDVTGEPLIQRSDDNAETLKKRLSTYHAQTAPVVAYYQKTGIWKPIDASQEPGQVWKSLLKIFDDKAMVAGRSGSLLNKIGLKN.

ATP is bound at residue 52–57 (GAGKGT). The tract at residues 72–101 (ATGDMLRAQVAAKTPLGREAKKIMDAGGLV) is NMP. AMP contacts are provided by residues Thr-73, Arg-78, 99-101 (GLV), 128-131 (GFPR), and Gln-135. The segment at 169–206 (GRLVHPASGRSYHKIFNPPKAPMTDDVTGEPLIQRSDD) is LID. Residues Arg-170 and 179 to 180 (SY) contribute to the ATP site. AMP is bound by residues Arg-203 and Arg-214. Gln-242 is a binding site for ATP.

It belongs to the adenylate kinase family. AK2 subfamily. Monomer.

The protein resides in the cytoplasm. It is found in the cytosol. Its subcellular location is the mitochondrion intermembrane space. The enzyme catalyses AMP + ATP = 2 ADP. Catalyzes the reversible transfer of the terminal phosphate group between ATP and AMP. Plays an important role in cellular energy homeostasis and in adenine nucleotide metabolism. Adenylate kinase activity is critical for regulation of the phosphate utilization and the AMP de novo biosynthesis pathways. The protein is Adenylate kinase (adk1) of Pyrenophora tritici-repentis (strain Pt-1C-BFP) (Wheat tan spot fungus).